The following is a 153-amino-acid chain: MSIEVNNESAIAADEAKLQRLAGYTFDIMHVHPDAELAILLVDEAAMEQLHVQWMDEPGPTDVLSFPMDELRPGTEDEPSPAGLLGDVVLCPQVAQVQAETTGHTLMDELLLLMTHGILHLLGFDHAEPAEEREMFGIQRDILVGFARYDRQH.

The Zn(2+) site is built by His116, His120, and His126.

Belongs to the endoribonuclease YbeY family. Zn(2+) serves as cofactor.

The protein resides in the cytoplasm. In terms of biological role, single strand-specific metallo-endoribonuclease involved in late-stage 70S ribosome quality control and in maturation of the 3' terminus of the 16S rRNA. The chain is Endoribonuclease YbeY from Leifsonia xyli subsp. xyli (strain CTCB07).